The sequence spans 125 residues: Phosphoribosyl-AMP cyclohydrolase (125 aa).

Asp-74 contributes to the Mg(2+) binding site. Cys-75 is a binding site for Zn(2+). Asp-76 and Asp-78 together coordinate Mg(2+). 2 residues coordinate Zn(2+): Cys-92 and Cys-99.

The protein belongs to the PRA-CH family. As to quaternary structure, homodimer. The cofactor is Mg(2+). Zn(2+) serves as cofactor.

It is found in the cytoplasm. The catalysed reaction is 1-(5-phospho-beta-D-ribosyl)-5'-AMP + H2O = 1-(5-phospho-beta-D-ribosyl)-5-[(5-phospho-beta-D-ribosylamino)methylideneamino]imidazole-4-carboxamide. Its pathway is amino-acid biosynthesis; L-histidine biosynthesis; L-histidine from 5-phospho-alpha-D-ribose 1-diphosphate: step 3/9. Catalyzes the hydrolysis of the adenine ring of phosphoribosyl-AMP. This is Phosphoribosyl-AMP cyclohydrolase from Geotalea uraniireducens (strain Rf4) (Geobacter uraniireducens).